The primary structure comprises 739 residues: ABC transporter G family member 20 (739 aa).

The 264-residue stretch at 88–351 (LSFKDLTYSV…FSEFGHPIPE (264 aa)) folds into the ABC transporter domain. 144 to 151 (GASGSGKS) is an ATP binding site. The ABC transmembrane type-2 domain maps to 433–643 (TEMLVIGKRS…PYEGVLQNEF (211 aa)). 6 helical membrane passes run 452-472 (LFGI…TIFW), 487-507 (FFAF…PVFL), 528-548 (VLAH…AFAA), 563-583 (FLFF…FVTF), 593-613 (IGFT…GFFI), and 712-732 (LWIT…TLLI).

The protein belongs to the ABC transporter superfamily. ABCG family. Eye pigment precursor importer (TC 3.A.1.204) subfamily.

It localises to the membrane. This Arabidopsis thaliana (Mouse-ear cress) protein is ABC transporter G family member 20 (ABCG20).